The primary structure comprises 61 residues: Temporin-1Tb (61 aa).

Residues 1–22 form the signal peptide; it reads MFTLKKSLLLLFFLGTINLSLC. Positions 23-44 are excised as a propeptide; it reads EEERNAEEERRDEPDERDVQVE. Residue Leu-59 is modified to Leucine amide.

The protein belongs to the frog skin active peptide (FSAP) family. Temporin subfamily. Homo-oligomerizes in membranes as homodimers, homotrimers, or even homotetramers. Oligomerizes in presence of LPS. In Gram-positive bacterial mimetic membranes, the aggregation is weakly pronounced, and penetration proceeds more rapidly and is deeper than in Gram-negative bacterial mimetic membranes where aggregation is high. Homo-oligomerization is prevented by temporin-L. Expressed by the skin glands.

The protein localises to the secreted. Its subcellular location is the target cell membrane. It is found in the target cell. The protein resides in the target cell cytoplasm. Its function is as follows. Amphipathic alpha-helical antimicrobial peptide with potent activity against Gram-positive bacteria, weak activity against Gram-negative bacteria, and moderate activity against fungi. Mainly acts by causing membrane permeabilization, but is unable to forme pore-like openings. Is also able to penetrate eukaryotic cells (keratinocytes), and kill intracellular S.aureus (both wild-type and MRSA) without injuring host cells. Shows inhibitory effect on biofilm formation of Gram-positive bacteria, but not of Gram-negative bacteria. Shows antiviral activity against herpes simplex virus 1 (HSV-1) by disrupting the viral envelope. Also displays anti-leishmania activity by damaging parasite membrane. Does not show hemolytic activity. Acts synergistically with temporin-L that improves temporin-1Tb activity by preventing its self-association in lipopolysaccharides (LPS). In vitro, promotes cell migration and wound healing. The sequence is that of Temporin-1Tb from Rana temporaria (European common frog).